We begin with the raw amino-acid sequence, 416 residues long: Glutamyl-tRNA reductase (416 aa).

Substrate is bound by residues 49-52 (TCNR), S105, 110-112 (EPQ), and Q116. C50 (nucleophile) is an active-site residue. NADP(+) is bound at residue 185–190 (GAGETI).

Belongs to the glutamyl-tRNA reductase family. As to quaternary structure, homodimer.

It catalyses the reaction (S)-4-amino-5-oxopentanoate + tRNA(Glu) + NADP(+) = L-glutamyl-tRNA(Glu) + NADPH + H(+). Its pathway is porphyrin-containing compound metabolism; protoporphyrin-IX biosynthesis; 5-aminolevulinate from L-glutamyl-tRNA(Glu): step 1/2. Functionally, catalyzes the NADPH-dependent reduction of glutamyl-tRNA(Glu) to glutamate 1-semialdehyde (GSA). The sequence is that of Glutamyl-tRNA reductase from Shewanella putrefaciens (strain CN-32 / ATCC BAA-453).